The following is a 178-amino-acid chain: Anthranilate synthase component 2 (178 aa).

Positions 1-178 constitute a Glutamine amidotransferase type-1 domain; the sequence is MIVVVDCKDS…RNFVEMCHDG (178 aa). Residue 49–51 coordinates L-glutamine; sequence GPG. Residue cysteine 71 is the Nucleophile; for GATase activity of the active site. L-glutamine-binding positions include glutamine 75 and 120–121; that span reads SL. Active-site for GATase activity residues include histidine 155 and glutamate 157.

As to quaternary structure, heterotetramer consisting of two non-identical subunits: a beta subunit (TrpG) and a large alpha subunit (TrpE).

The catalysed reaction is chorismate + L-glutamine = anthranilate + pyruvate + L-glutamate + H(+). It functions in the pathway amino-acid biosynthesis; L-tryptophan biosynthesis; L-tryptophan from chorismate: step 1/5. In terms of biological role, part of a heterotetrameric complex that catalyzes the two-step biosynthesis of anthranilate, an intermediate in the biosynthesis of L-tryptophan. In the first step, the glutamine-binding beta subunit (TrpG) of anthranilate synthase (AS) provides the glutamine amidotransferase activity which generates ammonia as a substrate that, along with chorismate, is used in the second step, catalyzed by the large alpha subunit of AS (TrpE) to produce anthranilate. In the absence of TrpG, TrpE can synthesize anthranilate directly from chorismate and high concentrations of ammonia. The polypeptide is Anthranilate synthase component 2 (trpG) (Archaeoglobus fulgidus (strain ATCC 49558 / DSM 4304 / JCM 9628 / NBRC 100126 / VC-16)).